Here is a 119-residue protein sequence, read N- to C-terminus: Large ribosomal subunit protein bL20 (119 aa).

Belongs to the bacterial ribosomal protein bL20 family.

Binds directly to 23S ribosomal RNA and is necessary for the in vitro assembly process of the 50S ribosomal subunit. It is not involved in the protein synthesizing functions of that subunit. This chain is Large ribosomal subunit protein bL20, found in Nitrobacter winogradskyi (strain ATCC 25391 / DSM 10237 / CIP 104748 / NCIMB 11846 / Nb-255).